A 372-amino-acid polypeptide reads, in one-letter code: O-methyltransferase bfoE (372 aa).

S-adenosyl-L-methionine is bound at residue W186. H285 serves as the catalytic Proton acceptor.

Belongs to the class I-like SAM-binding methyltransferase superfamily. Cation-independent O-methyltransferase family.

The protein operates within secondary metabolite biosynthesis. In terms of biological role, cytochrome P450 monooxygenase; part of the gene cluster that mediates the biosynthesis of bifonsecin B, a dimeric gamma-naphthopyrone. The first step in the biosynthesis of bifonsecin B is the production of gamma-naphthopyrone precursor YWA1 by the non-reducing polyketide synthase albA, via condensation of one acetyl-CoA starter unit with 6 malonyl-CoA units. YWA1 is then methylated by bfoE at position C-6 to yield foncesin which is further methylated at position C-8 by bfoD to produce fonsecin B. A key enzyme in the biosynthetic pathway is the cytochrome P450 monooxygenase bfoB which catalyzes the oxidative dimerization of fonsecin B to bifonsecin B. Bfob also catalyzes the oxidative dimerization of rubrofusarin B into nigerone. The stereoselectivity of bfoB is influenced by the two natural monomeric substrates; homodimerization of fonsecin B yields a stereochemically pure biaryl, M-foncerine B, while rubrofusarin B yields a mixture of enantiomers M- and P-nigerone. The polypeptide is O-methyltransferase bfoE (Aspergillus brasiliensis (strain CBS 101740 / IMI 381727 / IBT 21946)).